The chain runs to 439 residues: Xylose isomerase (439 aa).

Residues His101 and Asp104 contribute to the active site. Positions 232, 268, 271, 296, 307, 309, and 339 each coordinate Mg(2+).

This sequence belongs to the xylose isomerase family. In terms of assembly, homotetramer. Mg(2+) serves as cofactor.

It localises to the cytoplasm. It catalyses the reaction alpha-D-xylose = alpha-D-xylulofuranose. In Haemophilus influenzae (strain PittGG), this protein is Xylose isomerase.